Here is a 53-residue protein sequence, read N- to C-terminus: Large ribosomal subunit protein bL32c (53 aa).

It belongs to the bacterial ribosomal protein bL32 family.

The protein resides in the plastid. It localises to the chloroplast. This Glycine max (Soybean) protein is Large ribosomal subunit protein bL32c.